We begin with the raw amino-acid sequence, 277 residues long: Large ribosomal subunit protein uL2 (277 aa).

2 disordered regions span residues 32–58 (KSLT…RGGG) and 225–277 (VAMN…RRNK). Over residues 258–277 (YKTRKKKRYSDKFIIKRRNK) the composition is skewed to basic residues.

Belongs to the universal ribosomal protein uL2 family. As to quaternary structure, part of the 50S ribosomal subunit. Forms a bridge to the 30S subunit in the 70S ribosome.

In terms of biological role, one of the primary rRNA binding proteins. Required for association of the 30S and 50S subunits to form the 70S ribosome, for tRNA binding and peptide bond formation. It has been suggested to have peptidyltransferase activity; this is somewhat controversial. Makes several contacts with the 16S rRNA in the 70S ribosome. This Borrelia garinii subsp. bavariensis (strain ATCC BAA-2496 / DSM 23469 / PBi) (Borreliella bavariensis) protein is Large ribosomal subunit protein uL2.